The primary structure comprises 182 residues: Transcription termination/antitermination protein NusG (182 aa).

The KOW domain maps to 130–161; that stretch reads VGEVVRVNEGPFADFNGTVEEVDYEKSRLKVS.

This sequence belongs to the NusG family.

Participates in transcription elongation, termination and antitermination. The sequence is that of Transcription termination/antitermination protein NusG from Vibrio vulnificus (strain CMCP6).